The chain runs to 946 residues: Glycine dehydrogenase (decarboxylating) (946 aa).

Lys-700 is modified (N6-(pyridoxal phosphate)lysine).

The protein belongs to the GcvP family. The glycine cleavage system is composed of four proteins: P, T, L and H. Pyridoxal 5'-phosphate is required as a cofactor.

It catalyses the reaction N(6)-[(R)-lipoyl]-L-lysyl-[glycine-cleavage complex H protein] + glycine + H(+) = N(6)-[(R)-S(8)-aminomethyldihydrolipoyl]-L-lysyl-[glycine-cleavage complex H protein] + CO2. Its function is as follows. The glycine cleavage system catalyzes the degradation of glycine. The P protein binds the alpha-amino group of glycine through its pyridoxal phosphate cofactor; CO(2) is released and the remaining methylamine moiety is then transferred to the lipoamide cofactor of the H protein. The protein is Glycine dehydrogenase (decarboxylating) of Pseudomonas fluorescens (strain SBW25).